Reading from the N-terminus, the 449-residue chain is Anthocyanidin 3-O-glucosyltransferase 1 (449 aa).

Histidine 3 acts as the Proton acceptor in catalysis. An anthocyanidin is bound at residue histidine 3. Aspartate 103 (charge relay) is an active-site residue. Threonine 125, alanine 325, glutamine 327, histidine 342, tryptophan 345, asparagine 346, serine 347, and glutamate 350 together coordinate UDP-alpha-D-glucose. Alanine 365 contacts an anthocyanidin. UDP-alpha-D-glucose is bound by residues glutamate 366 and glutamine 367.

It belongs to the UDP-glycosyltransferase family. Expressed in cotyledons and roots, but not in leaves.

The enzyme catalyses an anthocyanidin + UDP-alpha-D-glucose + H(+) = an anthocyanidin 3-O-beta-D-glucoside + UDP. Its pathway is pigment biosynthesis; anthocyanin biosynthesis. Its function is as follows. In the presence of other necessary color factors, this glycosylation reaction allows the accumulation of anthocyanin pigments. The sequence is that of Anthocyanidin 3-O-glucosyltransferase 1 (GT1) from Manihot esculenta (Cassava).